Consider the following 436-residue polypeptide: UPF0597 protein YhaM (436 aa).

It belongs to the UPF0597 family.

This is UPF0597 protein YhaM from Escherichia coli (strain SE11).